The primary structure comprises 507 residues: Xylose import ATP-binding protein XylG (507 aa).

2 consecutive ABC transporter domains span residues Leu5 to Glu242 and Leu259 to Lys504. Gly37–Ser44 contacts ATP.

It belongs to the ABC transporter superfamily. Xylose importer (TC 3.A.1.2.4) family. As to quaternary structure, the complex is composed of two ATP-binding proteins (XylG), two transmembrane proteins (XylH) and a solute-binding protein (XylF).

It localises to the cell inner membrane. It catalyses the reaction D-xylose(out) + ATP + H2O = D-xylose(in) + ADP + phosphate + H(+). Part of the ABC transporter complex XylFGH involved in xylose import. Responsible for energy coupling to the transport system. This Photobacterium profundum (strain SS9) protein is Xylose import ATP-binding protein XylG.